The chain runs to 552 residues: uncharacterized protein (552 aa).

In terms of domain architecture, DhaL spans 8–200; sequence KLFAEMIIQG…LAIVYAGFLK (193 aa).

This is an uncharacterized protein from Staphylococcus saprophyticus subsp. saprophyticus (strain ATCC 15305 / DSM 20229 / NCIMB 8711 / NCTC 7292 / S-41).